The following is a 344-amino-acid chain: Protein-glutamate methylesterase/protein-glutamine glutaminase (344 aa).

In terms of domain architecture, Response regulatory spans 7–124 (RVLVVDDSAF…SLTFRQVAPE (118 aa)). A 4-aspartylphosphate modification is found at aspartate 58. The CheB-type methylesterase domain occupies 154-344 (PAVSGKIVVI…KIPEKLIELV (191 aa)). Catalysis depends on residues serine 166, histidine 193, and aspartate 289.

The protein belongs to the CheB family. In terms of processing, phosphorylated by CheA. Phosphorylation of the N-terminal regulatory domain activates the methylesterase activity.

It is found in the cytoplasm. The enzyme catalyses [protein]-L-glutamate 5-O-methyl ester + H2O = L-glutamyl-[protein] + methanol + H(+). It catalyses the reaction L-glutaminyl-[protein] + H2O = L-glutamyl-[protein] + NH4(+). Functionally, involved in chemotaxis. Part of a chemotaxis signal transduction system that modulates chemotaxis in response to various stimuli. Catalyzes the demethylation of specific methylglutamate residues introduced into the chemoreceptors (methyl-accepting chemotaxis proteins or MCP) by CheR. Also mediates the irreversible deamidation of specific glutamine residues to glutamic acid. The chain is Protein-glutamate methylesterase/protein-glutamine glutaminase from Thermotoga maritima (strain ATCC 43589 / DSM 3109 / JCM 10099 / NBRC 100826 / MSB8).